Reading from the N-terminus, the 366-residue chain is MRRWICCGDKKGDSDLSNEEVHLKSPWQNSEANQKNQKPQAVVKPEAQKEALPIEVPPLSVDEVKEKTDNFGSKSLIGEGSYGRVYYATLNDGKAVALKKLDVAPEAETNTEFLNQVSMVSRLKHENLIQLVGYCVDENLRVLAYEFATMGSLHDILHGRKGVQGAQPGPTLDWLTRVKIAVEAARGLEYLHEKVQPPVIHRDIRSSNVLLFEDYQAKVADFNLSNQAPDNAARLHSTRVLGTFGYHAPEYAMTGQLTQKSDVYSFGVVLLELLTGRKPVDHTMPRGQQSLVTWATPRLSEDKVKQCVDPKLKGEYPPKSVAKLAAVAALCVQYESEFRPNMSIVVKALQPLLKPPAPAPAPVPES.

Residues 8–23 (GDKKGDSDLSNEEVHL) are compositionally biased toward basic and acidic residues. The tract at residues 8-50 (GDKKGDSDLSNEEVHLKSPWQNSEANQKNQKPQAVVKPEAQKE) is disordered. Polar residues predominate over residues 26-39 (PWQNSEANQKNQKP). Residues 71-353 (FGSKSLIGEG…IVVKALQPLL (283 aa)) form the Protein kinase domain. ATP contacts are provided by residues 77-85 (IGEGSYGRV) and Lys-99. The Proton acceptor role is filled by Asp-203.

This sequence belongs to the protein kinase superfamily. Tyr protein kinase family. As to quaternary structure, interacts with OXI1. Post-translationally, autophosphorylated and phosphorylated by OXI1.

It catalyses the reaction L-tyrosyl-[protein] + ATP = O-phospho-L-tyrosyl-[protein] + ADP + H(+). Its activity is regulated as follows. Strongly activated in response to phosphatidic acid (PA) and xylanase in a OXI1- and PDK1-dependent manner, and, to a lesser extent, by hydrogen peroxide and flagellin in a OXI1-dependent manner. Its function is as follows. Probable tyrosine-protein kinase involved in oxidative burst-mediated signaling leading to specific genes expression. This is PTI1-like tyrosine-protein kinase 2 (PTI12) from Arabidopsis thaliana (Mouse-ear cress).